Here is a 499-residue protein sequence, read N- to C-terminus: Probable aspartyl protease At4g16563 (499 aa).

The first 26 residues, 1–26, serve as a signal peptide directing secretion; the sequence is MKTCLIFFLYTTILQYYFHFSVSSLS. A Peptidase A1 domain is found at 83-487; that stretch reads YLISLSVGSS…DLLNRRVGFA (405 aa). Asp-101 is an active-site residue. Cys-111 and Cys-119 are oxidised to a cystine. N-linked (GlcNAc...) asparagine glycosylation is found at Asn-175 and Asn-211. The active site involves Asp-353. Cys-396 and Cys-445 are disulfide-bonded. 2 N-linked (GlcNAc...) asparagine glycosylation sites follow: Asn-400 and Asn-415.

The protein belongs to the peptidase A1 family.

The protein is Probable aspartyl protease At4g16563 of Arabidopsis thaliana (Mouse-ear cress).